Reading from the N-terminus, the 387-residue chain is Protoheme IX farnesyltransferase, mitochondrial (387 aa).

8 helical membrane passes run 95–115 (LTVLVVLSTMSSYALAPYPGL), 117–137 (FNTLAWLTMGTALCSISANAF), 183–203 (FLVNPTVGWLGLGNIVLYMGI), 212–232 (IVNTWVGSLVGAIPPLMGWAA), 242–262 (PGGLITAAMLFAWQFPHFNAF), 284–306 (ALNARVSLRYALAFLPLSYAYIS), 311–330 (GPWYAVPATGTNMFLIARAW), and 345–365 (FFASLLHLPLLFTLTLACHMI).

It belongs to the UbiA prenyltransferase family.

Its subcellular location is the mitochondrion membrane. It carries out the reaction heme b + (2E,6E)-farnesyl diphosphate + H2O = Fe(II)-heme o + diphosphate. Converts protoheme IX and farnesyl diphosphate to heme O. This Schizosaccharomyces pombe (strain 972 / ATCC 24843) (Fission yeast) protein is Protoheme IX farnesyltransferase, mitochondrial (cox10).